Here is a 243-residue protein sequence, read N- to C-terminus: MQTIIISPLVSHRLCLARAVPCNRLLNNHHRAPPSIRLSNHRSTTSLRLFSSAAASRDSEMATEDVQDPRIAKIASSIRVIPDFPKPGIMFQDITTLLLDTEAFKDTIALFVDRYKDKGISVVAGVEARGFIFGPPIALAIGAKFVPMRKPKKLPGKVISEEYSLEYGTDTIEMHVGAVEPGERAIIIDDLIATGGTLAAAIRLLERVGVKIVECACVIELPELKGKEKLGETSLFVLVKSAA.

The transit peptide at 1 to 52 directs the protein to the chloroplast; it reads MQTIIISPLVSHRLCLARAVPCNRLLNNHHRAPPSIRLSNHRSTTSLRLFSS. Glutamine 2 is subject to N-acetylalanine.

Belongs to the purine/pyrimidine phosphoribosyltransferase family. As to quaternary structure, homodimer.

The protein localises to the plastid. Its subcellular location is the chloroplast. It is found in the cytoplasm. The catalysed reaction is AMP + diphosphate = 5-phospho-alpha-D-ribose 1-diphosphate + adenine. It participates in purine metabolism; AMP biosynthesis via salvage pathway; AMP from adenine: step 1/1. Functionally, catalyzes a salvage reaction resulting in the formation of AMP, that is energically less costly than de novo synthesis. Contributes primarily to the recycling of adenine into adenylate nucleotides, but is also involved in the inactivation of cytokinins by phosphoribosylation. Catalyzes the conversion of cytokinins from free bases (active form) to the corresponding nucleotides (inactive form). This chain is Adenine phosphoribosyltransferase 1, chloroplastic (APT1), found in Arabidopsis thaliana (Mouse-ear cress).